The sequence spans 359 residues: Phosphoserine aminotransferase (359 aa).

Arg-41 is a binding site for L-glutamate. Pyridoxal 5'-phosphate-binding positions include Ala-75–Ser-76, Trp-99, Thr-147, Asp-166, and Gln-189. Lys-190 carries the N6-(pyridoxal phosphate)lysine modification. Asn-231–Thr-232 is a pyridoxal 5'-phosphate binding site.

This sequence belongs to the class-V pyridoxal-phosphate-dependent aminotransferase family. SerC subfamily. As to quaternary structure, homodimer. Pyridoxal 5'-phosphate serves as cofactor.

The protein localises to the cytoplasm. The enzyme catalyses O-phospho-L-serine + 2-oxoglutarate = 3-phosphooxypyruvate + L-glutamate. It carries out the reaction 4-(phosphooxy)-L-threonine + 2-oxoglutarate = (R)-3-hydroxy-2-oxo-4-phosphooxybutanoate + L-glutamate. Its pathway is amino-acid biosynthesis; L-serine biosynthesis; L-serine from 3-phospho-D-glycerate: step 2/3. It functions in the pathway cofactor biosynthesis; pyridoxine 5'-phosphate biosynthesis; pyridoxine 5'-phosphate from D-erythrose 4-phosphate: step 3/5. Catalyzes the reversible conversion of 3-phosphohydroxypyruvate to phosphoserine and of 3-hydroxy-2-oxo-4-phosphonooxybutanoate to phosphohydroxythreonine. This is Phosphoserine aminotransferase from Azobacteroides pseudotrichonymphae genomovar. CFP2.